The primary structure comprises 75 residues: UPF0235 protein Mvan_2846 (75 aa).

It belongs to the UPF0235 family.

The sequence is that of UPF0235 protein Mvan_2846 from Mycolicibacterium vanbaalenii (strain DSM 7251 / JCM 13017 / BCRC 16820 / KCTC 9966 / NRRL B-24157 / PYR-1) (Mycobacterium vanbaalenii).